The following is a 271-amino-acid chain: Malonyl-[acyl-carrier protein] O-methyltransferase (271 aa).

This sequence belongs to the methyltransferase superfamily.

It carries out the reaction malonyl-[ACP] + S-adenosyl-L-methionine = malonyl-[ACP] methyl ester + S-adenosyl-L-homocysteine. It participates in cofactor biosynthesis; biotin biosynthesis. In terms of biological role, converts the free carboxyl group of a malonyl-thioester to its methyl ester by transfer of a methyl group from S-adenosyl-L-methionine (SAM). It allows to synthesize pimeloyl-ACP via the fatty acid synthetic pathway. The polypeptide is Malonyl-[acyl-carrier protein] O-methyltransferase (Halalkalibacterium halodurans (strain ATCC BAA-125 / DSM 18197 / FERM 7344 / JCM 9153 / C-125) (Bacillus halodurans)).